Here is a 326-residue protein sequence, read N- to C-terminus: Undecaprenyl-phosphate 4-deoxy-4-formamido-L-arabinose transferase (326 aa).

Transmembrane regions (helical) follow at residues 234–254 (LLSI…ILLI) and 269–289 (VFTL…GMGL).

The protein belongs to the glycosyltransferase 2 family.

Its subcellular location is the cell inner membrane. The enzyme catalyses UDP-4-deoxy-4-formamido-beta-L-arabinose + di-trans,octa-cis-undecaprenyl phosphate = 4-deoxy-4-formamido-alpha-L-arabinopyranosyl di-trans,octa-cis-undecaprenyl phosphate + UDP. Its pathway is glycolipid biosynthesis; 4-amino-4-deoxy-alpha-L-arabinose undecaprenyl phosphate biosynthesis; 4-amino-4-deoxy-alpha-L-arabinose undecaprenyl phosphate from UDP-4-deoxy-4-formamido-beta-L-arabinose and undecaprenyl phosphate: step 1/2. It participates in bacterial outer membrane biogenesis; lipopolysaccharide biosynthesis. In terms of biological role, catalyzes the transfer of 4-deoxy-4-formamido-L-arabinose from UDP to undecaprenyl phosphate. The modified arabinose is attached to lipid A and is required for resistance to polymyxin and cationic antimicrobial peptides. This Aeromonas hydrophila subsp. hydrophila (strain ATCC 7966 / DSM 30187 / BCRC 13018 / CCUG 14551 / JCM 1027 / KCTC 2358 / NCIMB 9240 / NCTC 8049) protein is Undecaprenyl-phosphate 4-deoxy-4-formamido-L-arabinose transferase.